Consider the following 174-residue polypeptide: Gamma-crystallin E (174 aa).

2 Beta/gamma crystallin 'Greek key' domains span residues 2–40 (GKIT…RVDS) and 41–83 (GCWM…RLIP). The interval 84-87 (HSSS) is connecting peptide. Beta/gamma crystallin 'Greek key' domains follow at residues 88 to 128 (HRIR…HVME) and 129 to 171 (GYWV…RRIM).

This sequence belongs to the beta/gamma-crystallin family. As to expression, detected in the superior olivary complex and fibers of the ventral aoustic stria of the auditory hindbrain.

Its function is as follows. Crystallins are the dominant structural components of the vertebrate eye lens. This is Gamma-crystallin E (Cryge) from Rattus norvegicus (Rat).